The sequence spans 669 residues: DNA mismatch repair protein MutL (669 aa).

The disordered stretch occupies residues 361–409 (ENVFSQPYQAPVTSSTQKKSTGAYQGSAGKGLTDTQKSPQKTLDTRQFG). Composition is skewed to polar residues over residues 363-384 (VFSQPYQAPVTSSTQKKSTGAY) and 393-402 (TDTQKSPQKT).

Belongs to the DNA mismatch repair MutL/HexB family.

Its function is as follows. This protein is involved in the repair of mismatches in DNA. It is required for dam-dependent methyl-directed DNA mismatch repair. May act as a 'molecular matchmaker', a protein that promotes the formation of a stable complex between two or more DNA-binding proteins in an ATP-dependent manner without itself being part of a final effector complex. This is DNA mismatch repair protein MutL from Proteus mirabilis (strain HI4320).